The sequence spans 285 residues: Probable endonuclease 4 (285 aa).

Residues His-69, His-109, Glu-145, Asp-179, His-182, His-216, Asp-229, His-231, and Glu-261 each contribute to the Zn(2+) site.

This sequence belongs to the AP endonuclease 2 family. It depends on Zn(2+) as a cofactor.

The catalysed reaction is Endonucleolytic cleavage to 5'-phosphooligonucleotide end-products.. Its function is as follows. Endonuclease IV plays a role in DNA repair. It cleaves phosphodiester bonds at apurinic or apyrimidinic (AP) sites, generating a 3'-hydroxyl group and a 5'-terminal sugar phosphate. This chain is Probable endonuclease 4, found in Escherichia coli O127:H6 (strain E2348/69 / EPEC).